A 250-amino-acid chain; its full sequence is U6 snRNA phosphodiesterase 1 (250 aa).

Residues 1–31 (MALVSYSSSEEDEGETSEPPGRRLPPLPPPT) are disordered. A compositionally biased stretch (pro residues) spans 22–31 (RRLPPLPPPT). Catalysis depends on His-105, which acts as the Proton acceptor. Residue 105–107 (HIS) coordinates AMP. UMP contacts are provided by residues Gln-149, Tyr-187, and 191–195 (SFHVS). AMP is bound by residues Tyr-187 and 189-195 (EPSFHVS). His-193 serves as the catalytic Proton donor.

Belongs to the 2H phosphoesterase superfamily. USB1 family.

It is found in the nucleus. The catalysed reaction is a 3'-end uridylyl-uridine-RNA = a 3'-end 2',3'-cyclophospho-uridine-RNA + uridine. It carries out the reaction a 3'-end uridylyl-adenosine-RNA = a 3'-end 2',3'-cyclophospho-uridine-RNA + adenosine. In terms of biological role, 3'-5' RNA exonuclease that trims the 3' end of oligo(U) and oligo(A) tracts of the pre-U6 small nuclear RNA (snRNA) molecule, leading to the formation of a mature U6 snRNA 3' end-terminated with a 2',3'-cyclic phosphate. Participates in the U6 snRNA 3' end processing that prevents U6 snRNA degradation. In addition also removes uridines from the 3' end of U6atac snRNA and possibly the vault RNA VTRNA1-1. The polypeptide is U6 snRNA phosphodiesterase 1 (Xenopus laevis (African clawed frog)).